Here is an 883-residue protein sequence, read N- to C-terminus: Alanine--tRNA ligase (883 aa).

The Zn(2+) site is built by His562, His566, Cys664, and His668.

This sequence belongs to the class-II aminoacyl-tRNA synthetase family. Homotetramer. Zn(2+) is required as a cofactor.

It localises to the cytoplasm. It catalyses the reaction tRNA(Ala) + L-alanine + ATP = L-alanyl-tRNA(Ala) + AMP + diphosphate. Catalyzes the attachment of alanine to tRNA(Ala) in a two-step reaction: alanine is first activated by ATP to form Ala-AMP and then transferred to the acceptor end of tRNA(Ala). Also edits incorrectly charged Ser-tRNA(Ala) and Gly-tRNA(Ala) via its editing domain. This chain is Alanine--tRNA ligase, found in Buchnera aphidicola subsp. Schizaphis graminum (strain Sg).